The primary structure comprises 487 residues: Cobyric acid synthase (487 aa).

Residues Val-248–Ser-435 form the GATase cobBQ-type domain. The Nucleophile role is filled by Cys-329. Residue His-427 is part of the active site.

It belongs to the CobB/CobQ family. CobQ subfamily.

It participates in cofactor biosynthesis; adenosylcobalamin biosynthesis. Catalyzes amidations at positions B, D, E, and G on adenosylcobyrinic A,C-diamide. NH(2) groups are provided by glutamine, and one molecule of ATP is hydrogenolyzed for each amidation. This chain is Cobyric acid synthase, found in Pseudomonas entomophila (strain L48).